The following is a 177-amino-acid chain: Large ribosomal subunit protein uL10 (177 aa).

Belongs to the universal ribosomal protein uL10 family. As to quaternary structure, part of the ribosomal stalk of the 50S ribosomal subunit. The N-terminus interacts with L11 and the large rRNA to form the base of the stalk. The C-terminus forms an elongated spine to which L12 dimers bind in a sequential fashion forming a multimeric L10(L12)X complex.

Functionally, forms part of the ribosomal stalk, playing a central role in the interaction of the ribosome with GTP-bound translation factors. This chain is Large ribosomal subunit protein uL10, found in Mycobacterium leprae (strain Br4923).